Here is a 247-residue protein sequence, read N- to C-terminus: Probable dihydroorotate dehydrogenase B (NAD(+)), electron transfer subunit (247 aa).

The region spanning 1–87 (MLRRVMIKET…RGPYGNGFKS (87 aa)) is the FAD-binding FR-type domain. The [2Fe-2S] cluster site is built by Cys200, Cys205, Cys208, and Cys216.

This sequence belongs to the PyrK family. Heterotetramer of 2 PyrK and 2 PyrD type B subunits. It depends on [2Fe-2S] cluster as a cofactor. FAD serves as cofactor.

The protein operates within pyrimidine metabolism; UMP biosynthesis via de novo pathway; orotate from (S)-dihydroorotate (NAD(+) route): step 1/1. In terms of biological role, responsible for channeling the electrons from the oxidation of dihydroorotate from the FMN redox center in the PyrD type B subunit to the ultimate electron acceptor NAD(+). This is Probable dihydroorotate dehydrogenase B (NAD(+)), electron transfer subunit from Pyrococcus abyssi (strain GE5 / Orsay).